A 340-amino-acid chain; its full sequence is MAMLKKRKHERTEQDCEYFQCYSDVSVHEEMIADTVRTNAYKLALLRNHSSLQGKTVLDVGAGTGILSVFSVQAGAQAVYAVEASSMSQLACQVVKSNDMENKVKVLNSSVESAEIPEQVDAIVSEWMGYALMYESMLPSVIYARDKWLKPGGLILPSCADLFIAPVNDLIVESRLDFWSEVKGMYGVDMSCMQSFARSCIMNKEMAVNLVSPEDVLSFPVRFASLDLNVCTQEEVRNLHGSFQFSCFGSSLLHGFAVWFSVTFPGENSVTLSTSPYGEETHWKQTLLYLDEEVQVEQDTEITGDVTLSPSDINPRHLRVLLNYSIGGGLRRTKQFQMGS.

An SAM-dependent MTase PRMT-type domain is found at 15 to 321 (DCEYFQCYSD…DINPRHLRVL (307 aa)). Residues His-28, Arg-37, Gly-61, Glu-83, and Glu-112 each coordinate S-adenosyl-L-methionine. Active-site residues include Glu-126 and Glu-135.

Belongs to the class I-like SAM-binding methyltransferase superfamily. Protein arginine N-methyltransferase family. PRMT6 subfamily.

Its subcellular location is the nucleus. It carries out the reaction L-arginyl-[protein] + 2 S-adenosyl-L-methionine = N(omega),N(omega)-dimethyl-L-arginyl-[protein] + 2 S-adenosyl-L-homocysteine + 2 H(+). Functionally, arginine methyltransferase that can catalyze the formation of both omega-N monomethylarginine (MMA) and asymmetrical dimethylarginine (aDMA), with a strong preference for the formation of aDMA. Preferentially methylates arginyl residues present in a glycine and arginine-rich domain and displays preference for monomethylated substrates. Specifically mediates the asymmetric dimethylation of histone H3 'Arg-2' to form H3R2me2a. H3R2me2a represents a specific tag for epigenetic transcriptional repression and is mutually exclusive with methylation on histone H3 'Lys-4' (H3K4me2 and H3K4me3). Acts as a transcriptional repressor of various genes such as HOXA2, THBS1 and TP53. Repression of TP53 blocks cellular senescence. Also methylates histone H2A and H4 'Arg-3' (H2AR3me and H4R3me, respectively). Acts as a regulator of DNA base excision during DNA repair by mediating the methylation of DNA polymerase beta (POLB), leading to the stimulation of its polymerase activity by enhancing DNA binding and processivity. Methylates HMGA1. Regulates alternative splicing events. Acts as a transcriptional coactivator of a number of steroid hormone receptors including ESR1, ESR2, PGR and NR3C1. The polypeptide is Protein arginine N-methyltransferase 6 (prmt6) (Xenopus tropicalis (Western clawed frog)).